Consider the following 125-residue polypeptide: Small ribosomal subunit protein uS13 (125 aa).

Residues 92-125 form a disordered region; sequence RRSLPVRGQNTQTNARTRKGKRKTVAGKKKAARK. Over residues 107 to 125 the composition is skewed to basic residues; it reads RTRKGKRKTVAGKKKAARK.

It belongs to the universal ribosomal protein uS13 family. Part of the 30S ribosomal subunit. Forms a loose heterodimer with protein S19. Forms two bridges to the 50S subunit in the 70S ribosome.

Located at the top of the head of the 30S subunit, it contacts several helices of the 16S rRNA. In the 70S ribosome it contacts the 23S rRNA (bridge B1a) and protein L5 of the 50S subunit (bridge B1b), connecting the 2 subunits; these bridges are implicated in subunit movement. Contacts the tRNAs in the A and P-sites. This Chlorobium luteolum (strain DSM 273 / BCRC 81028 / 2530) (Pelodictyon luteolum) protein is Small ribosomal subunit protein uS13.